Reading from the N-terminus, the 448-residue chain is Asparagine--tRNA ligase (448 aa).

This sequence belongs to the class-II aminoacyl-tRNA synthetase family. Homodimer.

It is found in the cytoplasm. The enzyme catalyses tRNA(Asn) + L-asparagine + ATP = L-asparaginyl-tRNA(Asn) + AMP + diphosphate + H(+). The chain is Asparagine--tRNA ligase from Streptococcus pyogenes serotype M4 (strain MGAS10750).